The following is a 784-amino-acid chain: LPS-assembly protein LptD (784 aa).

The N-terminal stretch at 1-24 (MKKRIPTLLATMIATALYSQQGLA) is a signal peptide. Cystine bridges form between Cys-31-Cys-724 and Cys-173-Cys-725.

Belongs to the LptD family. Component of the lipopolysaccharide transport and assembly complex. Interacts with LptE and LptA. Contains two intramolecular disulfide bonds.

The protein resides in the cell outer membrane. In terms of biological role, together with LptE, is involved in the assembly of lipopolysaccharide (LPS) at the surface of the outer membrane. In Escherichia coli O1:K1 / APEC, this protein is LPS-assembly protein LptD.